Here is a 217-residue protein sequence, read N- to C-terminus: Kunitz-type trypsin inhibitor-like 2 protein (217 aa).

An N-terminal signal peptide occupies residues 1–26 (MKPLSPLTLSFLLFVFITTLSLAFSN). Cystine bridges form between Cys70–Cys115 and Cys168–Cys175. Asn191 is a glycosylation site (N-linked (GlcNAc...) asparagine).

The protein belongs to the protease inhibitor I3 (leguminous Kunitz-type inhibitor) family.

Its subcellular location is the secreted. Its function is as follows. Might act as a protease inhibitor involved in plant defense responses. The chain is Kunitz-type trypsin inhibitor-like 2 protein (PIP20-2) from Pisum sativum (Garden pea).